The primary structure comprises 186 residues: UPF0149 protein Pfl01_5435 (186 aa).

The protein belongs to the UPF0149 family.

The polypeptide is UPF0149 protein Pfl01_5435 (Pseudomonas fluorescens (strain Pf0-1)).